We begin with the raw amino-acid sequence, 176 residues long: 2-C-methyl-D-erythritol 2,4-cyclodiphosphate synthase (176 aa).

A divalent metal cation is bound by residues D23, H25, and H60. 23-25 contributes to the 4-CDP-2-C-methyl-D-erythritol 2-phosphate binding site; that stretch reads DSH. Residue 149–152 coordinates 4-CDP-2-C-methyl-D-erythritol 2-phosphate; the sequence is TSGE.

The protein belongs to the IspF family. As to quaternary structure, homotrimer. It depends on a divalent metal cation as a cofactor.

It carries out the reaction 4-CDP-2-C-methyl-D-erythritol 2-phosphate = 2-C-methyl-D-erythritol 2,4-cyclic diphosphate + CMP. Its pathway is isoprenoid biosynthesis; isopentenyl diphosphate biosynthesis via DXP pathway; isopentenyl diphosphate from 1-deoxy-D-xylulose 5-phosphate: step 4/6. Involved in the biosynthesis of isopentenyl diphosphate (IPP) and dimethylallyl diphosphate (DMAPP), two major building blocks of isoprenoid compounds. Catalyzes the conversion of 4-diphosphocytidyl-2-C-methyl-D-erythritol 2-phosphate (CDP-ME2P) to 2-C-methyl-D-erythritol 2,4-cyclodiphosphate (ME-CPP) with a corresponding release of cytidine 5-monophosphate (CMP). This is 2-C-methyl-D-erythritol 2,4-cyclodiphosphate synthase from Chlamydia abortus (strain DSM 27085 / S26/3) (Chlamydophila abortus).